We begin with the raw amino-acid sequence, 345 residues long: UDP-N-acetylenolpyruvoylglucosamine reductase (345 aa).

Residues Leu25–Ala193 enclose the FAD-binding PCMH-type domain. Arg169 is a catalytic residue. Residue Ser237 is the Proton donor of the active site. The active site involves Glu333.

The protein belongs to the MurB family. It depends on FAD as a cofactor.

Its subcellular location is the cytoplasm. The catalysed reaction is UDP-N-acetyl-alpha-D-muramate + NADP(+) = UDP-N-acetyl-3-O-(1-carboxyvinyl)-alpha-D-glucosamine + NADPH + H(+). It participates in cell wall biogenesis; peptidoglycan biosynthesis. Functionally, cell wall formation. The chain is UDP-N-acetylenolpyruvoylglucosamine reductase from Pseudoalteromonas atlantica (strain T6c / ATCC BAA-1087).